Reading from the N-terminus, the 503-residue chain is Probable cytosol aminopeptidase (503 aa).

Mn(2+) is bound by residues K270 and D275. K282 is a catalytic residue. Positions 293, 352, and 354 each coordinate Mn(2+). Residue R356 is part of the active site.

The protein belongs to the peptidase M17 family. Requires Mn(2+) as cofactor.

Its subcellular location is the cytoplasm. It carries out the reaction Release of an N-terminal amino acid, Xaa-|-Yaa-, in which Xaa is preferably Leu, but may be other amino acids including Pro although not Arg or Lys, and Yaa may be Pro. Amino acid amides and methyl esters are also readily hydrolyzed, but rates on arylamides are exceedingly low.. The enzyme catalyses Release of an N-terminal amino acid, preferentially leucine, but not glutamic or aspartic acids.. In terms of biological role, presumably involved in the processing and regular turnover of intracellular proteins. Catalyzes the removal of unsubstituted N-terminal amino acids from various peptides. This chain is Probable cytosol aminopeptidase, found in Citrobacter koseri (strain ATCC BAA-895 / CDC 4225-83 / SGSC4696).